We begin with the raw amino-acid sequence, 152 residues long: Venom protein family 1 protein 2 (152 aa).

Residues 1 to 21 (MAKLVFISFLVASFCLIGCFG) form the signal peptide. A disulfide bond links Cys-70 and Cys-150.

This sequence belongs to the insect vpf1 family. Expressed by the venom gland (posterior main gland) (at protein level).

Its subcellular location is the secreted. The protein is Venom protein family 1 protein 2 of Platymeris rhadamanthus (Red spot assassin bug).